A 253-amino-acid chain; its full sequence is Glucosamine-6-phosphate deaminase (253 aa).

Asp-65 acts as the Proton acceptor; for enolization step in catalysis. Asn-133 (for ring-opening step) is an active-site residue. The active-site Proton acceptor; for ring-opening step is His-135. Glu-140 serves as the catalytic For ring-opening step.

It belongs to the glucosamine/galactosamine-6-phosphate isomerase family. NagB subfamily.

It carries out the reaction alpha-D-glucosamine 6-phosphate + H2O = beta-D-fructose 6-phosphate + NH4(+). It functions in the pathway amino-sugar metabolism; N-acetylneuraminate degradation; D-fructose 6-phosphate from N-acetylneuraminate: step 5/5. Catalyzes the reversible isomerization-deamination of glucosamine 6-phosphate (GlcN6P) to form fructose 6-phosphate (Fru6P) and ammonium ion. The sequence is that of Glucosamine-6-phosphate deaminase from Corynebacterium glutamicum (strain R).